We begin with the raw amino-acid sequence, 816 residues long: Neuroligin-4, Y-linked (816 aa).

Residues 1 to 43 form the signal peptide; sequence MLRPQGLLWLPLLFTSVCVMLNSNVLLWITALAIKFTLIDSQA. The Extracellular segment spans residues 44–676; sequence QYPVVNTNYG…TKRDYSTELS (633 aa). N-linked (GlcNAc...) asparagine glycosylation is present at Asn102. Disulfide bonds link Cys110-Cys146 and Cys306-Cys317. The interval 359–364 is interaction with NRXN1; sequence QGEFLN. Cys476 and Cys510 form a disulfide bridge. Asn511 is a glycosylation site (N-linked (GlcNAc...) asparagine). Residues 636–659 are disordered; sequence TKRPAITPANNPKHSKDPHKTGPE. Basic and acidic residues predominate over residues 649–658; it reads HSKDPHKTGP. Residues 677–697 traverse the membrane as a helical segment; sequence VTIAVGASLLFLNILAFAALY. Residues 698–816 lie on the Cytoplasmic side of the membrane; sequence YKKDKRRHET…LPHGHSTTRV (119 aa). Ser712 bears the Phosphoserine mark.

The protein belongs to the type-B carboxylesterase/lipase family. In terms of assembly, homodimer. Interacts with NRXN1 in a calcium-dependent manner. Interaction with neurexins is mediated by heparan sulfate glycan modification on neurexin. Interacts through its C-terminus with DLG4/PSD-95 third PDZ domain. As to expression, expressed in fetal and adult brain, prostate and testis.

It localises to the cell membrane. The protein localises to the postsynaptic density membrane. In terms of biological role, cell surface protein involved in cell-cell-interactions via its interactions with neurexin family members. In Homo sapiens (Human), this protein is Neuroligin-4, Y-linked (NLGN4Y).